Here is a 332-residue protein sequence, read N- to C-terminus: Glycerol-3-phosphate dehydrogenase [NAD(P)+] (332 aa).

NADPH contacts are provided by Trp11, Arg30, and Lys108. Residues Lys108, Gly137, and Ser139 each coordinate sn-glycerol 3-phosphate. Position 141 (Ala141) interacts with NADPH. Sn-glycerol 3-phosphate-binding residues include Lys192, Asp245, Ser255, Arg256, and Asn257. The active-site Proton acceptor is Lys192. Arg256 contributes to the NADPH binding site. Residues Val280 and Glu282 each coordinate NADPH.

It belongs to the NAD-dependent glycerol-3-phosphate dehydrogenase family.

It is found in the cytoplasm. The enzyme catalyses sn-glycerol 3-phosphate + NAD(+) = dihydroxyacetone phosphate + NADH + H(+). The catalysed reaction is sn-glycerol 3-phosphate + NADP(+) = dihydroxyacetone phosphate + NADPH + H(+). It functions in the pathway membrane lipid metabolism; glycerophospholipid metabolism. Its function is as follows. Catalyzes the reduction of the glycolytic intermediate dihydroxyacetone phosphate (DHAP) to sn-glycerol 3-phosphate (G3P), the key precursor for phospholipid synthesis. This chain is Glycerol-3-phosphate dehydrogenase [NAD(P)+], found in Burkholderia thailandensis (strain ATCC 700388 / DSM 13276 / CCUG 48851 / CIP 106301 / E264).